A 499-amino-acid polypeptide reads, in one-letter code: Interferon regulatory factor 5 (499 aa).

Positions 12-18 (PRRVRLK) match the Nuclear localization signal motif. The segment at residues 14-122 (RVRLKPWLVA…QPYKVYEVCS (109 aa)) is a DNA-binding region (IRF tryptophan pentad repeat). The tract at residues 121-142 (CSNGPAPAESQPSEDNAEEEEE) is disordered. The Nuclear export signal signature appears at 145 to 155 (LQKMLPGLSIT). Phosphoserine; by TBK1 occurs at positions 153 and 294. Phosphoserine is present on Ser302. Glycyl lysine isopeptide (Lys-Gly) (interchain with G-Cter in ubiquitin) cross-links involve residues Lys412 and Lys413. A phosphoserine mark is found at Ser432, Ser436, Ser438, Ser441, and Ser447.

This sequence belongs to the IRF family. Homodimer, when phosphorylated. Interacts with TASL (via pLxIS motif); interaction takes place downstream of TLR7, TLR8 or TLR9, leading to its activation. Interacts with MYD88 and TRAF6. In terms of processing, phosphorylation of serine and threonine residues by IKBKB in a C-terminal autoinhibitory region, stimulates dimerization, transport into the nucleus, assembly with the coactivator CBP/EP300 and initiation of transcription. 'Lys-63'-linked polyubiquitination by TRAF6 is required for activation.

The protein localises to the cytoplasm. Its subcellular location is the nucleus. Maintained as a monomer in an autoinhibited state. Phosphorylation and activation follow the following steps: innate adapter protein TASL recruits IRF5, thereby licensing IRF5 for phosphorylation by IKBKB. Phosphorylated IRF5 dissociates from the adapter proteins, dimerizes, and then enters the nucleus to induce IFNs. In terms of biological role, transcription factor that plays a critical role in innate immunity by activating expression of type I interferon (IFN) IFNA and INFB and inflammatory cytokines downstream of endolysosomal toll-like receptors TLR7, TLR8 and TLR9. Regulates the transcription of type I IFN genes (IFN-alpha and IFN-beta) and IFN-stimulated genes (ISG) by binding to an interferon-stimulated response element (ISRE) in their promoters. Can efficiently activate both the IFN-beta (IFNB) and the IFN-alpha (IFNA) genes and mediate their induction downstream of the TLR-activated, MyD88-dependent pathway. This chain is Interferon regulatory factor 5, found in Bos taurus (Bovine).